We begin with the raw amino-acid sequence, 506 residues long: 2-isopropylmalate synthase (506 aa).

The 265-residue stretch at 8-272 (LIVFDTTLRD…ETGIQLKEIL (265 aa)) folds into the Pyruvate carboxyltransferase domain. The Mn(2+) site is built by Asp17, His206, His208, and Asn242. A regulatory domain region spans residues 396–506 (ELEYVAVTVC…YLNAVNKALL (111 aa)).

The protein belongs to the alpha-IPM synthase/homocitrate synthase family. LeuA type 1 subfamily. Homodimer. It depends on Mn(2+) as a cofactor.

It localises to the cytoplasm. The catalysed reaction is 3-methyl-2-oxobutanoate + acetyl-CoA + H2O = (2S)-2-isopropylmalate + CoA + H(+). It functions in the pathway amino-acid biosynthesis; L-leucine biosynthesis; L-leucine from 3-methyl-2-oxobutanoate: step 1/4. Functionally, catalyzes the condensation of the acetyl group of acetyl-CoA with 3-methyl-2-oxobutanoate (2-ketoisovalerate) to form 3-carboxy-3-hydroxy-4-methylpentanoate (2-isopropylmalate). This Methylacidiphilum infernorum (isolate V4) (Methylokorus infernorum (strain V4)) protein is 2-isopropylmalate synthase.